The following is a 746-amino-acid chain: NAD(P)H-quinone oxidoreductase subunit 5, chloroplastic (746 aa).

A run of 16 helical transmembrane segments spans residues 9–29 (WIIP…LLLF), 40–60 (WTFL…YLSI), 89–109 (IDPL…LVLI), 125–145 (FAYM…SNLI), 147–167 (VYFF…FWFT), 185–205 (GDFG…SFEF), 221–241 (VNLL…IAKS), 258–278 (TPIS…FLVA), 280–300 (LLPL…IGII), 327–347 (LGYM…FHLI), 354–374 (ALLF…VGYS), 396–416 (TAFL…CFWS), 425–445 (LLFS…TAFY), 547–567 (ILFP…IGIP), 608–628 (FSVS…KPFY), and 723–743 (YLFL…FFYF).

This sequence belongs to the complex I subunit 5 family. As to quaternary structure, NDH is composed of at least 16 different subunits, 5 of which are encoded in the nucleus.

It is found in the plastid. The protein resides in the chloroplast thylakoid membrane. It carries out the reaction a plastoquinone + NADH + (n+1) H(+)(in) = a plastoquinol + NAD(+) + n H(+)(out). The enzyme catalyses a plastoquinone + NADPH + (n+1) H(+)(in) = a plastoquinol + NADP(+) + n H(+)(out). Functionally, NDH shuttles electrons from NAD(P)H:plastoquinone, via FMN and iron-sulfur (Fe-S) centers, to quinones in the photosynthetic chain and possibly in a chloroplast respiratory chain. The immediate electron acceptor for the enzyme in this species is believed to be plastoquinone. Couples the redox reaction to proton translocation, and thus conserves the redox energy in a proton gradient. The chain is NAD(P)H-quinone oxidoreductase subunit 5, chloroplastic (ndhF) from Arabidopsis thaliana (Mouse-ear cress).